The following is a 124-amino-acid chain: Small ribosomal subunit protein uS12 (124 aa).

Aspartate 89 carries the post-translational modification 3-methylthioaspartic acid. The tract at residues 102–124 (LDTSGVNNRKHGRSKYGTKRPKS) is disordered. A compositionally biased stretch (basic residues) spans 109-124 (NRKHGRSKYGTKRPKS).

The protein belongs to the universal ribosomal protein uS12 family. As to quaternary structure, part of the 30S ribosomal subunit. Contacts proteins S8 and S17. May interact with IF1 in the 30S initiation complex.

Functionally, with S4 and S5 plays an important role in translational accuracy. Interacts with and stabilizes bases of the 16S rRNA that are involved in tRNA selection in the A site and with the mRNA backbone. Located at the interface of the 30S and 50S subunits, it traverses the body of the 30S subunit contacting proteins on the other side and probably holding the rRNA structure together. The combined cluster of proteins S8, S12 and S17 appears to hold together the shoulder and platform of the 30S subunit. This chain is Small ribosomal subunit protein uS12, found in Francisella philomiragia subsp. philomiragia (strain ATCC 25017 / CCUG 19701 / FSC 153 / O#319-036).